The following is a 209-amino-acid chain: NAD-reducing hydrogenase HoxS subunit delta (209 aa).

As to quaternary structure, tetramer of an alpha and a gamma subunits (flavin-containing dimer), and a delta and a nickel-containing beta subunits (hydrogenase dimer). [4Fe-4S] cluster serves as cofactor. [3Fe-4S] cluster is required as a cofactor. The cofactor is [2Fe-2S] cluster. Requires FMN as cofactor. It depends on Ni(2+) as a cofactor.

The protein localises to the cytoplasm. It carries out the reaction H2 + NAD(+) = NADH + H(+). This is NAD-reducing hydrogenase HoxS subunit delta (hoxY) from Cupriavidus necator (strain ATCC 17699 / DSM 428 / KCTC 22496 / NCIMB 10442 / H16 / Stanier 337) (Ralstonia eutropha).